We begin with the raw amino-acid sequence, 408 residues long: Tyrosine--tRNA ligase (408 aa).

Residues 46 to 55 (PTAPDLHVGH) carry the 'HIGH' region motif. The 'KMSKS' region signature appears at 230–234 (KMSKS). Lys233 is a binding site for ATP. An S4 RNA-binding domain is found at 343 to 404 (VWICRLLTDA…GKRRFARIKF (62 aa)).

Belongs to the class-I aminoacyl-tRNA synthetase family. TyrS type 2 subfamily. In terms of assembly, homodimer.

Its subcellular location is the cytoplasm. The enzyme catalyses tRNA(Tyr) + L-tyrosine + ATP = L-tyrosyl-tRNA(Tyr) + AMP + diphosphate + H(+). In terms of biological role, catalyzes the attachment of tyrosine to tRNA(Tyr) in a two-step reaction: tyrosine is first activated by ATP to form Tyr-AMP and then transferred to the acceptor end of tRNA(Tyr). This chain is Tyrosine--tRNA ligase, found in Syntrophotalea carbinolica (strain DSM 2380 / NBRC 103641 / GraBd1) (Pelobacter carbinolicus).